We begin with the raw amino-acid sequence, 493 residues long: Cytochrome P450 2E1 (493 aa).

Residue F298 to T303 coordinates substrate. Position 437 (C437) interacts with heme.

This sequence belongs to the cytochrome P450 family. As to quaternary structure, interacts with chaperones HSP70 and HSP90; this interaction is required for initial targeting to mitochondria. The cofactor is heme.

It is found in the endoplasmic reticulum membrane. The protein resides in the microsome membrane. The protein localises to the mitochondrion inner membrane. The catalysed reaction is an organic molecule + reduced [NADPH--hemoprotein reductase] + O2 = an alcohol + oxidized [NADPH--hemoprotein reductase] + H2O + H(+). It carries out the reaction (5Z,8Z,11Z)-eicosatrienoate + reduced [NADPH--hemoprotein reductase] + O2 = 19-hydroxy-(5Z,8Z,11Z)-eicosatrienoate + oxidized [NADPH--hemoprotein reductase] + H2O + H(+). It catalyses the reaction (5Z,8Z,11Z,14Z,17Z)-eicosapentaenoate + reduced [NADPH--hemoprotein reductase] + O2 = 19-hydroxy-(5Z,8Z,11Z,14Z,17Z)-eicosapentaenoate + oxidized [NADPH--hemoprotein reductase] + H2O + H(+). The enzyme catalyses (4Z,7Z,10Z,13Z,16Z,19Z)-docosahexaenoate + reduced [NADPH--hemoprotein reductase] + O2 = 21-hydroxy-(4Z,7Z,10Z,13Z,16Z,19Z)-docosahexaenoate + oxidized [NADPH--hemoprotein reductase] + H2O + H(+). The catalysed reaction is dodecanoate + reduced [NADPH--hemoprotein reductase] + O2 = 11-hydroxydodecanoate + oxidized [NADPH--hemoprotein reductase] + H2O + H(+). It carries out the reaction tetradecanoate + reduced [NADPH--hemoprotein reductase] + O2 = 13-hydroxytetradecanoate + oxidized [NADPH--hemoprotein reductase] + H2O + H(+). It catalyses the reaction 4-nitrophenol + NADPH + O2 + H(+) = 4-nitrocatechol + NADP(+) + H2O. It functions in the pathway lipid metabolism; fatty acid metabolism. Its activity is regulated as follows. The omega-1 hydroxylase activity is stimulated by cytochrome b5. Functionally, a cytochrome P450 monooxygenase involved in the metabolism of fatty acids. Mechanistically, uses molecular oxygen inserting one oxygen atom into a substrate, and reducing the second into a water molecule, with two electrons provided by NADPH via cytochrome P450 reductase (NADPH--hemoprotein reductase). Catalyzes the hydroxylation of carbon-hydrogen bonds. Hydroxylates fatty acids specifically at the omega-1 position displaying the highest catalytic activity for saturated fatty acids. May be involved in the oxidative metabolism of xenobiotics. The sequence is that of Cytochrome P450 2E1 (CYP2E1) from Mesocricetus auratus (Golden hamster).